Here is a 329-residue protein sequence, read N- to C-terminus: Ethylene-responsive transcription factor ERF117 (329 aa).

Disordered regions lie at residues aspartate 25 to lysine 51 and asparagine 71 to valine 90. The span at asparagine 71–glycine 86 shows a compositional bias: polar residues. Positions glycine 86–glutamate 143 form a DNA-binding region, AP2/ERF.

The protein belongs to the AP2/ERF transcription factor family. ERF subfamily.

Its subcellular location is the nucleus. In terms of biological role, probably acts as a transcriptional activator. Binds to the GCC-box pathogenesis-related promoter element. May be involved in the regulation of gene expression by stress factors and by components of stress signal transduction pathways. This chain is Ethylene-responsive transcription factor ERF117 (ERF117), found in Arabidopsis thaliana (Mouse-ear cress).